The chain runs to 284 residues: RNase adapter protein RapZ (284 aa).

An ATP-binding site is contributed by 8–15 (GRSGSGKS). 56-59 (DVRN) is a GTP binding site. The segment at 266 to 284 (RSRGKNVQSRHRTLEKRKT) is RNA-binding.

Belongs to the RapZ-like family. RapZ subfamily. In terms of assembly, homotrimer.

Modulates the synthesis of GlmS, by affecting the processing and stability of the regulatory small RNA GlmZ. When glucosamine-6-phosphate (GlcN6P) concentrations are high in the cell, RapZ binds GlmZ and targets it to cleavage by RNase E. Consequently, GlmZ is inactivated and unable to activate GlmS synthesis. Under low GlcN6P concentrations, RapZ is sequestered and inactivated by an other regulatory small RNA, GlmY, preventing GlmZ degradation and leading to synthesis of GlmS. The chain is RNase adapter protein RapZ from Citrobacter koseri (strain ATCC BAA-895 / CDC 4225-83 / SGSC4696).